The following is a 471-amino-acid chain: Cysteine--tRNA ligase (471 aa).

Cysteine 29 contributes to the Zn(2+) binding site. Positions 31 to 41 (LTVQSEPHVGH) match the 'HIGH' region motif. Zn(2+) is bound by residues cysteine 215, histidine 240, and glutamate 244. The 'KMSKS' region signature appears at 271–275 (KMSKS). Lysine 274 is a binding site for ATP.

The protein belongs to the class-I aminoacyl-tRNA synthetase family. As to quaternary structure, monomer. Requires Zn(2+) as cofactor.

The protein resides in the cytoplasm. The enzyme catalyses tRNA(Cys) + L-cysteine + ATP = L-cysteinyl-tRNA(Cys) + AMP + diphosphate. In Nocardioides sp. (strain ATCC BAA-499 / JS614), this protein is Cysteine--tRNA ligase.